We begin with the raw amino-acid sequence, 113 residues long: Hydrogenase maturation factor HypA (113 aa).

Position 2 (histidine 2) interacts with Ni(2+). Zn(2+)-binding residues include cysteine 73, cysteine 76, cysteine 89, and cysteine 92.

It belongs to the HypA/HybF family.

Involved in the maturation of [NiFe] hydrogenases. Required for nickel insertion into the metal center of the hydrogenase. The protein is Hydrogenase maturation factor HypA of Albidiferax ferrireducens (strain ATCC BAA-621 / DSM 15236 / T118) (Rhodoferax ferrireducens).